The following is a 95-amino-acid chain: Aspartyl/glutamyl-tRNA(Asn/Gln) amidotransferase subunit C (95 aa).

It belongs to the GatC family. In terms of assembly, heterotrimer of A, B and C subunits.

The enzyme catalyses L-glutamyl-tRNA(Gln) + L-glutamine + ATP + H2O = L-glutaminyl-tRNA(Gln) + L-glutamate + ADP + phosphate + H(+). It catalyses the reaction L-aspartyl-tRNA(Asn) + L-glutamine + ATP + H2O = L-asparaginyl-tRNA(Asn) + L-glutamate + ADP + phosphate + 2 H(+). Functionally, allows the formation of correctly charged Asn-tRNA(Asn) or Gln-tRNA(Gln) through the transamidation of misacylated Asp-tRNA(Asn) or Glu-tRNA(Gln) in organisms which lack either or both of asparaginyl-tRNA or glutaminyl-tRNA synthetases. The reaction takes place in the presence of glutamine and ATP through an activated phospho-Asp-tRNA(Asn) or phospho-Glu-tRNA(Gln). In Nitrobacter hamburgensis (strain DSM 10229 / NCIMB 13809 / X14), this protein is Aspartyl/glutamyl-tRNA(Asn/Gln) amidotransferase subunit C.